Reading from the N-terminus, the 162-residue chain is MARVEL domain-containing protein 1 (162 aa).

Residues 1–17 lie on the Cytoplasmic side of the membrane; that stretch reads MPTQPQEKRSFLQFLKS. In terms of domain architecture, MARVEL spans 14–155; that stretch reads FLKSFVGIVR…SGIYCSCRKC (142 aa). The helical transmembrane segment at 18–38 threads the bilayer; it reads FVGIVRVLQILLGAGLWVTIA. Residues 39–47 are Extracellular-facing; that stretch reads ANKYEGSIH. A helical membrane pass occupies residues 48 to 68; sequence FVLFVAVLFWLLTLAIFILTL. The Cytoplasmic segment spans residues 69–86; it reads LDKQDLVPIVGGERWLLS. The helical transmembrane segment at 87-107 threads the bilayer; the sequence is NLIHDVVATLLYLSTIGIMIY. Over 108-127 the chain is Extracellular; the sequence is KTQKNSYCNLDVYKHHCLYK. Residues 128 to 148 form a helical membrane-spanning segment; it reads VYLTASVFACLTAAVYLLSGI. Residues 149–162 are Cytoplasmic-facing; the sequence is YCSCRKCRGERTVV.

It localises to the membrane. The protein resides in the nucleus. The sequence is that of MARVEL domain-containing protein 1 (marveld1) from Danio rerio (Zebrafish).